The sequence spans 37 residues: Diuretic hormone 1 (37 aa).

Belongs to the sauvagine/corticotropin-releasing factor/urotensin I family.

The protein resides in the secreted. Its function is as follows. Stimulates fluid secretion by the Malpighian tubules. Increases cyclic AMP production. In Tenebrio molitor (Yellow mealworm beetle), this protein is Diuretic hormone 1.